Consider the following 222-residue polypeptide: Nudix hydrolase 11 (222 aa).

The Nudix hydrolase domain occupies 31–175 (AKSSAVLVCL…EGERYLLQYF (145 aa)). The Nudix box signature appears at 73 to 96 (GGKRDQEDKDDIATALREAREEIG). Mg(2+) is bound by residues glutamate 90 and glutamate 94. A helical membrane pass occupies residues 186–204 (FIIWALTAGILIRVASIVY).

Belongs to the Nudix hydrolase family. PCD1 subfamily. It depends on Mn(2+) as a cofactor. The cofactor is Mg(2+). As to expression, expressed in roots, stems and leaves.

Its subcellular location is the peroxisome membrane. Functionally, coenzyme A diphosphatase which mediates the cleavage of CoA into 3',5'-ADP from CoA and 4'-phosphopantetheine. Can use malonyl-CoA, hexanoyl-CoA, lauroyl-CoA, myristoyl-CoA and palmitoyl-CoA as substrates, but not isobutyryl-CoA or propionyl-CoA. The chain is Nudix hydrolase 11 (NUDT11) from Arabidopsis thaliana (Mouse-ear cress).